A 273-amino-acid polypeptide reads, in one-letter code: Phosphatidylglycerol--prolipoprotein diacylglyceryl transferase (273 aa).

7 consecutive transmembrane segments (helical) span residues 21–41, 60–80, 95–115, 124–144, 176–196, 203–223, and 236–256; these read ISVRWYGLMYLVGFMFALWLA, LLFAGFLGVVLGGRIGYVLFY, VWTGGMSFHGGLLGVITAMLW, FFGVADMIAPLVPFGLGMGRM, SQLYEMALEGIVLFFILNWFI, GSVSGLFLAGYGTFRFLVEYV, and FISMGQILSLPMVIIGVLMMV. A 1,2-diacyl-sn-glycero-3-phospho-(1'-sn-glycerol) is bound at residue Arg143.

The protein belongs to the Lgt family.

The protein resides in the cell inner membrane. The enzyme catalyses L-cysteinyl-[prolipoprotein] + a 1,2-diacyl-sn-glycero-3-phospho-(1'-sn-glycerol) = an S-1,2-diacyl-sn-glyceryl-L-cysteinyl-[prolipoprotein] + sn-glycerol 1-phosphate + H(+). It participates in protein modification; lipoprotein biosynthesis (diacylglyceryl transfer). In terms of biological role, catalyzes the transfer of the diacylglyceryl group from phosphatidylglycerol to the sulfhydryl group of the N-terminal cysteine of a prolipoprotein, the first step in the formation of mature lipoproteins. In Vibrio atlanticus (strain LGP32) (Vibrio splendidus (strain Mel32)), this protein is Phosphatidylglycerol--prolipoprotein diacylglyceryl transferase.